A 446-amino-acid chain; its full sequence is Sensor protein PfeS (446 aa).

Residues 1 to 9 (MRRHPLLWK) lie on the Cytoplasmic side of the membrane. The helical transmembrane segment at 10–30 (LALLQVGFCLLLTWLIYTWGL) threads the bilayer. Over 31 to 155 (SVERSTYFLA…LLPGGLTPWT (125 aa)) the chain is Periplasmic. A helical transmembrane segment spans residues 156 to 176 (HLVTHGIVPTLLAALLGLLLY). The HAMP domain occupies 177-233 (RHLVVPLNRLRDRADALRADELESTPLAAPLAARRDELGELAQALEHMAERLRLSLA). Over 177-446 (RHLVVPLNRL…CLHLWLPAAA (270 aa)) the chain is Cytoplasmic. The 206-residue stretch at 241 to 446 (TLSHELRTPL…CLHLWLPAAA (206 aa)) folds into the Histidine kinase domain. Position 244 is a phosphohistidine; by autocatalysis (H244).

Its subcellular location is the cell inner membrane. It carries out the reaction ATP + protein L-histidine = ADP + protein N-phospho-L-histidine.. Its function is as follows. Member of the two-component regulatory system PfeR/PfeS. May activate PfeR by phosphorylation. This chain is Sensor protein PfeS (pfeS), found in Pseudomonas aeruginosa (strain ATCC 15692 / DSM 22644 / CIP 104116 / JCM 14847 / LMG 12228 / 1C / PRS 101 / PAO1).